The sequence spans 343 residues: Holliday junction branch migration complex subunit RuvB (343 aa).

Residues 1–178 (MNFVQQNREG…FGMILELQFY (178 aa)) are large ATPase domain (RuvB-L). ATP is bound by residues Leu17, Arg18, Gly59, Lys62, Thr63, Thr64, 125–127 (EDY), Arg168, Tyr178, and Arg215. A Mg(2+)-binding site is contributed by Thr63. The tract at residues 179-249 (TVKELMEIIK…LVEKTMDILE (71 aa)) is small ATPAse domain (RuvB-S). Residues 252-343 (KLGLDEMDRK…DESLRKSDES (92 aa)) form a head domain (RuvB-H) region. DNA is bound by residues Arg307 and Arg312.

Belongs to the RuvB family. In terms of assembly, homohexamer. Forms an RuvA(8)-RuvB(12)-Holliday junction (HJ) complex. HJ DNA is sandwiched between 2 RuvA tetramers; dsDNA enters through RuvA and exits via RuvB. An RuvB hexamer assembles on each DNA strand where it exits the tetramer. Each RuvB hexamer is contacted by two RuvA subunits (via domain III) on 2 adjacent RuvB subunits; this complex drives branch migration. In the full resolvosome a probable DNA-RuvA(4)-RuvB(12)-RuvC(2) complex forms which resolves the HJ.

The protein localises to the cytoplasm. It catalyses the reaction ATP + H2O = ADP + phosphate + H(+). The RuvA-RuvB-RuvC complex processes Holliday junction (HJ) DNA during genetic recombination and DNA repair, while the RuvA-RuvB complex plays an important role in the rescue of blocked DNA replication forks via replication fork reversal (RFR). RuvA specifically binds to HJ cruciform DNA, conferring on it an open structure. The RuvB hexamer acts as an ATP-dependent pump, pulling dsDNA into and through the RuvAB complex. RuvB forms 2 homohexamers on either side of HJ DNA bound by 1 or 2 RuvA tetramers; 4 subunits per hexamer contact DNA at a time. Coordinated motions by a converter formed by DNA-disengaged RuvB subunits stimulates ATP hydrolysis and nucleotide exchange. Immobilization of the converter enables RuvB to convert the ATP-contained energy into a lever motion, pulling 2 nucleotides of DNA out of the RuvA tetramer per ATP hydrolyzed, thus driving DNA branch migration. The RuvB motors rotate together with the DNA substrate, which together with the progressing nucleotide cycle form the mechanistic basis for DNA recombination by continuous HJ branch migration. Branch migration allows RuvC to scan DNA until it finds its consensus sequence, where it cleaves and resolves cruciform DNA. The chain is Holliday junction branch migration complex subunit RuvB from Pseudothermotoga lettingae (strain ATCC BAA-301 / DSM 14385 / NBRC 107922 / TMO) (Thermotoga lettingae).